Here is a 616-residue protein sequence, read N- to C-terminus: DEAD-box ATP-dependent RNA helicase 53, mitochondrial (616 aa).

A mitochondrion-targeting transit peptide spans 1-81; the sequence is MITTVLRRSL…DFRASMVSQA (81 aa). A Q motif motif is present at residues 104–132; that stretch reads LAISELGISPEIVKALSSKGIEKLFPIQK. The Helicase ATP-binding domain maps to 135-309; it reads LEPAMEGRDM…KKYLNNPLTV (175 aa). ATP is bound at residue 148–155; sequence ARTGTGKT. The DEAD box motif lies at 257–260; that stretch reads DEAD. In terms of domain architecture, Helicase C-terminal spans 338–482; sequence IIGPLVTEHA…ELPSIAVERG (145 aa). Positions 489 to 616 are disordered; that stretch reads GIGSRSGGSF…FGSNDGKRSY (128 aa). Composition is skewed to gly residues over residues 492 to 501 and 508 to 531; these read SRSGGSFGGG and SFGG…GRSG. Composition is skewed to low complexity over residues 532 to 568 and 578 to 587; these read GSSN…SGGR and GSSNNRSSGF.

Belongs to the DEAD box helicase family. DDX21/DDX50 subfamily.

The protein resides in the mitochondrion. The enzyme catalyses ATP + H2O = ADP + phosphate + H(+). This chain is DEAD-box ATP-dependent RNA helicase 53, mitochondrial (RH53), found in Arabidopsis thaliana (Mouse-ear cress).